A 714-amino-acid polypeptide reads, in one-letter code: DNA ligase (714 aa).

NAD(+) contacts are provided by residues 47–51 (DAEYD), 96–97 (SL), and Glu-128. Lys-130 (N6-AMP-lysine intermediate) is an active-site residue. 4 residues coordinate NAD(+): Arg-151, Glu-188, Lys-306, and Lys-330. Residues Cys-435, Cys-438, Cys-453, and Cys-459 each contribute to the Zn(2+) site. A BRCT domain is found at 637 to 714 (RRDTAVAGKT…TEDEWLALIS (78 aa)).

This sequence belongs to the NAD-dependent DNA ligase family. LigA subfamily. Mg(2+) is required as a cofactor. Requires Mn(2+) as cofactor.

The catalysed reaction is NAD(+) + (deoxyribonucleotide)n-3'-hydroxyl + 5'-phospho-(deoxyribonucleotide)m = (deoxyribonucleotide)n+m + AMP + beta-nicotinamide D-nucleotide.. Functionally, DNA ligase that catalyzes the formation of phosphodiester linkages between 5'-phosphoryl and 3'-hydroxyl groups in double-stranded DNA using NAD as a coenzyme and as the energy source for the reaction. It is essential for DNA replication and repair of damaged DNA. The chain is DNA ligase from Rhodopseudomonas palustris (strain HaA2).